The primary structure comprises 172 residues: Podoplanin (172 aa).

The first 22 residues, 1-22 (MWTVPVLFWVLGSVWFWDSAQG), serve as a signal peptide directing secretion. Over 23–141 (GTIGVNEDDI…KKDGLPVVTL (119 aa)) the chain is Extracellular. O-linked (GalNAc...) threonine glycans are attached at residues Thr-37, Thr-51, Thr-52, Thr-53, and Thr-56. Positions 49 to 132 (KITTTGATGG…AGDETQTTDK (84 aa)) are disordered. The span at 51–63 (TTTGATGGLNEST) shows a compositional bias: polar residues. Asn-60 carries N-linked (GlcNAc...) asparagine glycosylation. O-linked (GalNAc...) threonine glycans are attached at residues Thr-63, Thr-71, and Thr-77. Positions 72–81 (QRERGTKPPL) are enriched in basic and acidic residues. The O-linked (GalNAc...) serine glycan is linked to Ser-85. Residue Thr-86 is glycosylated (O-linked (GalNAc...) threonine). Ser-87 is a glycosylation site (O-linked (GalNAc...) serine). O-linked (GalNAc...) threonine glycosylation is present at Thr-89. Residue Ser-90 is glycosylated (O-linked (GalNAc...) serine). Basic and acidic residues predominate over residues 90-99 (SDHDHREHES). Thr-100, Thr-101, Thr-102, Thr-107, and Thr-115 each carry an O-linked (GalNAc...) threonine glycan. A compositionally biased stretch (low complexity) spans 100 to 109 (TTTVKVVTSH). Over residues 110-132 (SVDKKTSHPNRDNAGDETQTTDK) the composition is skewed to basic and acidic residues. A helical membrane pass occupies residues 142 to 162 (VGIIVGVLLAIGFVGGIFIVV). Residues 143-147 (GIIVG) are requires for dimerization and lipidd rafts association. Over 163-172 (MKKISGRFSP) the chain is Cytoplasmic. Residues 164–165 (KK) are requires for interaction with MSN and EZR.

This sequence belongs to the podoplanin family. Homodimer. Interacts with CLEC1B; the interaction is independent of CLEC1B glycosylation and activates CLEC1B; the interaction is dependent of sialic acid on O-glycans. Interacts with CD9; this interaction is homophilic and attenuates platelet aggregation and pulmonary metastasis induced by PDPN. Interacts with LGALS8; the interaction is glycosylation-dependent; may participate in connection of the lymphatic endothelium to the surrounding extracellular matrix. Interacts with HSPA9. Interacts (via extracellular domain) with CD44; this interaction is required for PDPN-mediated directional migration and regulation of lamellipodia extension/stabilization during cell spreading and migration. Interacts (via cytoplasmic domain) with MSN and EZR; activates RHOA and promotes epithelial-mesenchymal transition. Interacts with CCL21; relocalized PDPN to the basolateral membrane. In terms of processing, extensively O-glycosylated. Contains sialic acid residues. O-glycosylation is necessary for platelet aggregation activity. Disialylated at Thr-52; sialic acid is critical for platelet-aggregating activity and for CLEC1B interaction. Post-translationally, phosphorylated by PKA; decreases cell migration. The N-terminus is blocked. Detected at high levels in lung and brain, at lower levels in kidney, stomach, liver, spleen and esophagus, and not detected in skin and small intestine. Expressed in epithelial cells of choroid plexus, ependyma, glomerulus and alveolus, in mesothelial cells and in endothelia of lymphatic vessels. Also expressed in stromal cells of peripheral lymphoid tissue and thymic epithelial cells. Detected in carcinoma cell lines and cultured fibroblasts. Expressed at higher levels in colon carcinomas than in normal colon tissue.

The protein localises to the membrane. It is found in the cell projection. The protein resides in the lamellipodium membrane. Its subcellular location is the filopodium membrane. It localises to the microvillus membrane. The protein localises to the ruffle membrane. It is found in the membrane raft. The protein resides in the apical cell membrane. Its subcellular location is the basolateral cell membrane. It localises to the invadopodium. Its function is as follows. Mediates effects on cell migration and adhesion through its different partners. During development plays a role in blood and lymphatic vessels separation by binding CLEC1B, triggering CLEC1B activation in platelets and leading to platelet activation and/or aggregation. Interaction with CD9, on the contrary, attenuates platelet aggregation and pulmonary metastasis induced by PDPN. Mediates effects on cell migration and adhesion through its different partners. Through MSN or EZR interaction promotes epithelial-mesenchymal transition (EMT) leading to ERZ phosphorylation and triggering RHOA activation leading to cell migration increase and invasiveness. Interaction with CD44 promotes directional cell migration in epithelial and tumor cells. In lymph nodes (LNs), controls fibroblastic reticular cells (FRCs) adhesion to the extracellular matrix (ECM) and contraction of the actomyosin by maintaining ERM proteins (EZR; MSN and RDX) and MYL9 activation through association with unknown transmembrane proteins. Engagement of CLEC1B by PDPN promotes FRCs relaxation by blocking lateral membrane interactions leading to reduction of ERM proteins (EZR; MSN and RDX) and MYL9 activation. Through binding with LGALS8 may participate in connection of the lymphatic endothelium to the surrounding extracellular matrix. In keratinocytes, induces changes in cell morphology showing an elongated shape, numerous membrane protrusions, major reorganization of the actin cytoskeleton, increased motility and decreased cell adhesion. Controls invadopodia stability and maturation leading to efficient degradation of the extracellular matrix (ECM) in tumor cells through modulation of RHOC activity in order to activate ROCK1/ROCK2 and LIMK1/LIMK2 and inactivation of CFL1. Required for normal lung cell proliferation and alveolus formation at birth. Does not function as a water channel or as a regulator of aquaporin-type water channels. Does not have any effect on folic acid or amino acid transport. In Mus musculus (Mouse), this protein is Podoplanin.